A 360-amino-acid chain; its full sequence is Phenylalanine--tRNA ligase alpha subunit (360 aa).

Glu260 serves as a coordination point for Mg(2+).

It belongs to the class-II aminoacyl-tRNA synthetase family. Phe-tRNA synthetase alpha subunit type 1 subfamily. Tetramer of two alpha and two beta subunits. Mg(2+) serves as cofactor.

It is found in the cytoplasm. The enzyme catalyses tRNA(Phe) + L-phenylalanine + ATP = L-phenylalanyl-tRNA(Phe) + AMP + diphosphate + H(+). This chain is Phenylalanine--tRNA ligase alpha subunit, found in Bradyrhizobium sp. (strain BTAi1 / ATCC BAA-1182).